A 214-amino-acid polypeptide reads, in one-letter code: External core antigen (214 aa).

The N-terminal stretch at 1–19 (MQLFHLCLIISCTCPTVQA) is a signal peptide. The HBEAG stretch occupies residues 25-27 (GWL). The segment at 165–214 (NAPILSTLPETTVVRRRDRGRSPRRRTPSPRRRRSQSPRRRRSQSRESQC) is disordered. Positions 178–207 (VRRRDRGRSPRRRTPSPRRRRSQSPRRRRS) are enriched in basic residues. The 1; half-length repeat unit spans residues 186–192 (SPRRRTP). The 3 X 8 AA repeats of S-P-R-R-R-R-S-Q stretch occupies residues 186 to 208 (SPRRRTPSPRRRRSQSPRRRRSQ). Residues 186-214 (SPRRRTPSPRRRRSQSPRRRRSQSRESQC) constitute a propeptide that is removed on maturation. 2 repeat units span residues 193 to 200 (SPRRRRSQ) and 201 to 208 (SPRRRRSQ).

The protein belongs to the orthohepadnavirus precore antigen family. As to quaternary structure, homodimerizes. Phosphorylated. Post-translationally, cleaved by host furin.

The protein localises to the secreted. Its subcellular location is the host nucleus. May regulate immune response to the intracellular capsid in acting as a T-cell tolerogen, by having an immunoregulatory effect which prevents destruction of infected cells by cytotoxic T-cells. This immune regulation may predispose to chronicity during perinatal infections and prevent severe liver injury during adult infections. The sequence is that of External core antigen from Homo sapiens (Human).